Here is a 464-residue protein sequence, read N- to C-terminus: ATP synthase subunit beta (464 aa).

An ATP-binding site is contributed by 152-159 (GGAGVGKS).

It belongs to the ATPase alpha/beta chains family. In terms of assembly, F-type ATPases have 2 components, CF(1) - the catalytic core - and CF(0) - the membrane proton channel. CF(1) has five subunits: alpha(3), beta(3), gamma(1), delta(1), epsilon(1). CF(0) has three main subunits: a(1), b(2) and c(9-12). The alpha and beta chains form an alternating ring which encloses part of the gamma chain. CF(1) is attached to CF(0) by a central stalk formed by the gamma and epsilon chains, while a peripheral stalk is formed by the delta and b chains.

Its subcellular location is the cell membrane. The enzyme catalyses ATP + H2O + 4 H(+)(in) = ADP + phosphate + 5 H(+)(out). Produces ATP from ADP in the presence of a proton gradient across the membrane. The catalytic sites are hosted primarily by the beta subunits. This Protochlamydia amoebophila (strain UWE25) protein is ATP synthase subunit beta.